The chain runs to 714 residues: P-loop NTPase domain-containing protein LPA1 (714 aa).

The segment covering 1–11 (MPMPPQCASSK) has biased composition (low complexity). Disordered regions lie at residues 1–42 (MPMP…PPPK), 259–293 (QKLDIVSHPNTNEGRDDTSDDKAHHGSSELPPRTE), and 595–689 (FGSE…GSGN). A compositionally biased stretch (basic and acidic residues) spans 271-285 (EGRDDTSDDKAHHGS). A compositionally biased stretch (acidic residues) spans 595-617 (FGSEEDADDPPDAGTDEDLTDEE). Positions 618–636 (RDMHEIEAGSVDEHSTKSD) are enriched in basic and acidic residues. Residues 659-670 (AASSTKNSSNQE) show a composition bias toward polar residues.

In terms of tissue distribution, expressed in roots, leaf blade shoots, leaf sheath shoots and panicles.

In terms of biological role, required for the accumulation of phytic acid in seeds. Phytic acid is the primary storage form of phosphorus in cereal grains and other plant seeds. This chain is P-loop NTPase domain-containing protein LPA1, found in Oryza sativa subsp. japonica (Rice).